The following is a 431-amino-acid chain: Na(+)/H(+) antiporter NhaA (431 aa).

The next 11 membrane-spanning stretches (helical) occupy residues 33–53 (VGGA…NSPW), 74–94 (LSIS…VVGV), 112–132 (ALPI…FVGV), 144–164 (GWAI…AVIA), 173–193 (IFLL…IAVF), 197–217 (QLSF…GLAV), 225–245 (FLLL…GVHA), 279–299 (FAVP…LSGF), 311–331 (VIAG…YVLA), 347–367 (VLGL…IGEL), and 379–399 (AKIA…VVLL).

This sequence belongs to the NhaA Na(+)/H(+) (TC 2.A.33) antiporter family.

The protein resides in the cell membrane. The catalysed reaction is Na(+)(in) + 2 H(+)(out) = Na(+)(out) + 2 H(+)(in). Its function is as follows. Na(+)/H(+) antiporter that extrudes sodium in exchange for external protons. This is Na(+)/H(+) antiporter NhaA from Mycolicibacterium smegmatis (strain ATCC 700084 / mc(2)155) (Mycobacterium smegmatis).